The primary structure comprises 2792 residues: E3 ubiquitin-protein ligase UBR5 (2792 aa).

N-acetylthreonine is present on Thr2. A compositionally biased stretch (basic and acidic residues) spans 77–88; sequence DRLELGKPDNND. The segment at 77-175 is disordered; that stretch reads DRLELGKPDN…DRGSGLLGSQ (99 aa). Over residues 94–111 the composition is skewed to low complexity; the sequence is SSSGTGRTSRPGRTSDSP. Ser110 carries the phosphoserine modification. The segment covering 135–144 has biased composition (gly residues); that stretch reads GVGGSGGGSS. A UBA domain is found at 184-226; it reads VIPEELISQAQVVLQGKSRSVIIRELQRTNLDVNLAVNNLLSR. A Phosphoserine modification is found at Ser321. Residues 322–341 are compositionally biased toward basic and acidic residues; that stretch reads FDNERGSTSKEGESNPDKKN. Residues 322–347 are disordered; the sequence is FDNERGSTSKEGESNPDKKNTPVQSP. Phosphoserine occurs at positions 346 and 572. Residues 577–598 are compositionally biased toward basic and acidic residues; that stretch reads KSMEKASKTLETKPESKQEPVK. A disordered region spans residues 577–642; sequence KSMEKASKTL…APREEEKVNE (66 aa). Ser606 is subject to Phosphoserine. Residues 608-622 are compositionally biased toward low complexity; it reads ASTCSDASSIASSAS. Position 631 is a phosphothreonine (Thr631). Ser802, Ser922, and Ser1012 each carry phosphoserine. Disordered regions lie at residues 993-1029 and 1046-1069; these read AGLG…SMDP and TAAT…EPSV. A compositionally biased stretch (pro residues) spans 1011-1027; it reads VSPPIAPPSWVPDPPSM. Residues 1046 to 1067 show a composition bias toward polar residues; the sequence is TAATGSGQGPSTSTIPGPSTEP. Residues Thr1109 and Thr1129 each carry the phosphothreonine modification. The UBR-type zinc finger occupies 1171–1239; sequence DTCSFTWTGA…EKCKCKTLIA (69 aa). Phosphoserine occurs at positions 1221, 1302, 1349, 1369, and 1475. The interval 1293–1312 is disordered; it reads REDRNRKTASPEDSDMPDHD. The disordered stretch occupies residues 1509–1734; it reads SVEPLPPRPS…PSSTSTPAAS (226 aa). Residues 1518-1531 show a composition bias toward low complexity; that stretch reads SSDQASSSSQSQSS. Positions 1532-1547 are enriched in polar residues; sequence YIIRNPQQRRISQSQP. Residue Ser1543 is modified to Phosphoserine. Composition is skewed to acidic residues over residues 1553-1568 and 1599-1608; these read EEQD…EVEV and HDEDGSDMEL. A compositionally biased stretch (polar residues) spans 1623-1632; it reads NHSNQDNASG. Composition is skewed to low complexity over residues 1635 to 1651, 1662 to 1675, and 1720 to 1734; these read SVVT…ASSV, SNDS…SSQS, and AAST…PAAS. A Phosphothreonine modification is found at Thr1730. At Ser1735 the chain carries Phosphoserine. At Tyr1740 the chain carries Phosphotyrosine. At Ser1774 the chain carries Phosphoserine. The disordered stretch occupies residues 1853 to 1884; it reads LASAGDPGHPNHPLHASQNSARRERMTAREEA. Basic and acidic residues predominate over residues 1873-1884; sequence ARRERMTAREEA. Thr1963 is modified (phosphothreonine). The interval 1978–2015 is disordered; sequence GIDNEDSEHENDDDTSQSATLNDKDDDSLPAETGQNHP. The span at 1979–1992 shows a compositional bias: acidic residues; sequence IDNEDSEHENDDDT. Ser1984, Ser2020, and Ser2022 each carry phosphoserine. The residue at position 2024 (Thr2024) is a Phosphothreonine. At Ser2070 the chain carries Phosphoserine. Positions 2111–2137 are disordered; it reads RQKKEGEEQSLLAEEADSSKPGPSAPD. Thr2207 is subject to Phosphothreonine. Residues Ser2235 and Ser2283 each carry the phosphoserine modification. The interval 2317 to 2387 is disordered; the sequence is HTSLMQRLRN…SDDPDPLPAH (71 aa). 2 stretches are compositionally biased toward basic and acidic residues: residues 2326-2342 and 2350-2362; these read NRGE…EMRR and SRRD…RRQL. The region spanning 2371–2448 is the PABC domain; it reads PASEGNPSDD…AMELIIAHGR (78 aa). The 338-residue stretch at 2455-2792 folds into the HECT domain; it reads ILDLGLLDSS…AIKTKNFGFV (338 aa). Residues Ser2463, Ser2477, and Ser2479 each carry the phosphoserine modification. A disordered region spans residues 2467–2494; sequence VQENRKRHGSSRSVVDMDLEDTDDGDDN. Positions 2483–2493 are enriched in acidic residues; that stretch reads MDLEDTDDGDD. The active-site Glycyl thioester intermediate is the Cys2761.

This sequence belongs to the UBR5 family. In terms of assembly, homotetramer; composed of a dimer of dimers. Associates with CDK9 and TFIIS/TCEA1 and forms a transcription regulatory complex made of CDK9, RNAP II, UBR5 and TFIIS/TCEA1 that can stimulate target gene transcription (e.g. gamma fibrinogen/FGG) by recruiting their promoters. Associates with the E3 ligase complex containing DYRK2, EDD/UBR5, DDB1 and DCAF1 proteins (EDVP complex). Binds TOPBP1. Interacts with PIH1D1. Interacts with CIB1.

It localises to the nucleus. The protein localises to the cytoplasm. The catalysed reaction is S-ubiquitinyl-[E2 ubiquitin-conjugating enzyme]-L-cysteine + [acceptor protein]-L-lysine = [E2 ubiquitin-conjugating enzyme]-L-cysteine + N(6)-ubiquitinyl-[acceptor protein]-L-lysine.. Its pathway is protein modification; protein ubiquitination. Functionally, E3 ubiquitin-protein ligase involved in different protein quality control pathways in the cytoplasm and nucleus. Mainly acts as a ubiquitin chain elongator that extends pre-ubiquitinated substrates. Component of the N-end rule pathway: ubiquitinates proteins bearing specific N-terminal residues that are destabilizing according to the N-end rule, leading to their degradation. Recognizes type-1 N-degrons, containing positively charged amino acids (Arg, Lys and His). Together with UBR4, part of a cytoplasm protein quality control pathway that prevents protein aggregation by catalyzing assembly of heterotypic 'Lys-11'-/'Lys-48'-linked branched ubiquitin chains on aggregated proteins, leading to substrate recognition by the segregase p97/VCP and degradation by the proteasome: UBR5 is probably branching multiple 'Lys-48'-linked chains of substrates initially modified with mixed conjugates by UBR4. Together with ITCH, catalyzes 'Lys-48'-/'Lys-63'-branched ubiquitination of TXNIP, leading to its degradation: UBR5 mediates branching of 'Lys-48'-linked chains of substrates initially modified with 'Lys-63'-linked conjugates by ITCH. Catalytic component of a nuclear protein quality control pathway that mediates ubiquitination and degradation of unpaired transcription factors (i.e. transcription factors that are not assembled into functional multiprotein complexes): specifically recognizes and binds degrons that are not accessible when transcription regulators are associated with their coactivators. Ubiquitinates various unpaired transcription regulator (MYC, SUPT4H1, SUPT5H, CDC20 and MCRS1), as well as ligand-bound nuclear receptors (ESR1, NR1H3, NR3C1, PGR, RARA, RXRA AND VDR) that are not associated with their nuclear receptor coactivators (NCOAs). Involved in maturation and/or transcriptional regulation of mRNA by mediating polyubiquitination and activation of CDK9. Also acts as a regulator of DNA damage response by acting as a suppressor of RNF168, an E3 ubiquitin-protein ligase that promotes accumulation of 'Lys-63'-linked histone H2A and H2AX at DNA damage sites, thereby acting as a guard against excessive spreading of ubiquitinated chromatin at damaged chromosomes. Regulates DNA topoisomerase II binding protein (TopBP1) in the DNA damage response. Ubiquitinates acetylated PCK1. Acts as a positive regulator of the canonical Wnt signaling pathway by mediating (1) ubiquitination and stabilization of CTNNB1, and (2) 'Lys-48'-linked ubiquitination and degradation of TLE3. Promotes disassembly of the mitotic checkpoint complex (MCC) from the APC/C complex by catalyzing ubiquitination of BUB1B, BUB3 and CDC20. Plays an essential role in extraembryonic development. Required for the maintenance of skeletal tissue homeostasis by acting as an inhibitor of hedgehog (HH) signaling. This chain is E3 ubiquitin-protein ligase UBR5, found in Mus musculus (Mouse).